Reading from the N-terminus, the 145-residue chain is Small ribosomal subunit protein uS19 (145 aa).

Alanine 2 carries the post-translational modification N-acetylalanine. Lysine 108 is covalently cross-linked (Glycyl lysine isopeptide (Lys-Gly) (interchain with G-Cter in SUMO2)).

The protein belongs to the universal ribosomal protein uS19 family. As to quaternary structure, component of the small ribosomal subunit.

It localises to the cytoplasm. Functionally, component of the small ribosomal subunit. The ribosome is a large ribonucleoprotein complex responsible for the synthesis of proteins in the cell. In Oryctolagus cuniculus (Rabbit), this protein is Small ribosomal subunit protein uS19 (RPS15).